We begin with the raw amino-acid sequence, 269 residues long: Formamidopyrimidine-DNA glycosylase (269 aa).

The active-site Schiff-base intermediate with DNA is proline 2. Glutamate 3 (proton donor) is an active-site residue. The Proton donor; for beta-elimination activity role is filled by lysine 57. Histidine 90, arginine 109, and lysine 150 together coordinate DNA. The FPG-type zinc-finger motif lies at 235–269 (QVYGRKGEPCRVCGTPIVATKHAQRATFYCRHCQK). The active-site Proton donor; for delta-elimination activity is arginine 259.

Belongs to the FPG family. Monomer. Zn(2+) is required as a cofactor.

It catalyses the reaction Hydrolysis of DNA containing ring-opened 7-methylguanine residues, releasing 2,6-diamino-4-hydroxy-5-(N-methyl)formamidopyrimidine.. It carries out the reaction 2'-deoxyribonucleotide-(2'-deoxyribose 5'-phosphate)-2'-deoxyribonucleotide-DNA = a 3'-end 2'-deoxyribonucleotide-(2,3-dehydro-2,3-deoxyribose 5'-phosphate)-DNA + a 5'-end 5'-phospho-2'-deoxyribonucleoside-DNA + H(+). Its function is as follows. Involved in base excision repair of DNA damaged by oxidation or by mutagenic agents. Acts as a DNA glycosylase that recognizes and removes damaged bases. Has a preference for oxidized purines, such as 7,8-dihydro-8-oxoguanine (8-oxoG). Has AP (apurinic/apyrimidinic) lyase activity and introduces nicks in the DNA strand. Cleaves the DNA backbone by beta-delta elimination to generate a single-strand break at the site of the removed base with both 3'- and 5'-phosphates. The protein is Formamidopyrimidine-DNA glycosylase of Salmonella dublin (strain CT_02021853).